The following is a 271-amino-acid chain: Tryptophan synthase alpha chain (271 aa).

Catalysis depends on proton acceptor residues E47 and D58.

It belongs to the TrpA family. As to quaternary structure, tetramer of two alpha and two beta chains.

It carries out the reaction (1S,2R)-1-C-(indol-3-yl)glycerol 3-phosphate + L-serine = D-glyceraldehyde 3-phosphate + L-tryptophan + H2O. It participates in amino-acid biosynthesis; L-tryptophan biosynthesis; L-tryptophan from chorismate: step 5/5. The alpha subunit is responsible for the aldol cleavage of indoleglycerol phosphate to indole and glyceraldehyde 3-phosphate. The protein is Tryptophan synthase alpha chain of Thermus thermophilus (strain ATCC BAA-163 / DSM 7039 / HB27).